We begin with the raw amino-acid sequence, 309 residues long: tRNA uridine(34) hydroxylase (309 aa).

The Rhodanese domain maps to 129–223 (SEPGTIVIDT…YLEEVPAEQS (95 aa)). Cysteine 183 acts as the Cysteine persulfide intermediate in catalysis. The tract at residues 288-309 (YAERQRQVELAQARGKRPHIGS) is disordered.

The protein belongs to the TrhO family.

It carries out the reaction uridine(34) in tRNA + AH2 + O2 = 5-hydroxyuridine(34) in tRNA + A + H2O. In terms of biological role, catalyzes oxygen-dependent 5-hydroxyuridine (ho5U) modification at position 34 in tRNAs. The polypeptide is tRNA uridine(34) hydroxylase (Mesorhizobium japonicum (strain LMG 29417 / CECT 9101 / MAFF 303099) (Mesorhizobium loti (strain MAFF 303099))).